The following is a 314-amino-acid chain: Acetyl-coenzyme A carboxylase carboxyl transferase subunit alpha (314 aa).

Residues 32-289 enclose the CoA carboxyltransferase C-terminal domain; the sequence is EIDMLEASLK…KKMFLKHLNE (258 aa).

Belongs to the AccA family. In terms of assembly, acetyl-CoA carboxylase is a heterohexamer composed of biotin carboxyl carrier protein (AccB), biotin carboxylase (AccC) and two subunits each of ACCase subunit alpha (AccA) and ACCase subunit beta (AccD).

The protein resides in the cytoplasm. The catalysed reaction is N(6)-carboxybiotinyl-L-lysyl-[protein] + acetyl-CoA = N(6)-biotinyl-L-lysyl-[protein] + malonyl-CoA. It functions in the pathway lipid metabolism; malonyl-CoA biosynthesis; malonyl-CoA from acetyl-CoA: step 1/1. In terms of biological role, component of the acetyl coenzyme A carboxylase (ACC) complex. First, biotin carboxylase catalyzes the carboxylation of biotin on its carrier protein (BCCP) and then the CO(2) group is transferred by the carboxyltransferase to acetyl-CoA to form malonyl-CoA. This is Acetyl-coenzyme A carboxylase carboxyl transferase subunit alpha from Staphylococcus epidermidis (strain ATCC 35984 / DSM 28319 / BCRC 17069 / CCUG 31568 / BM 3577 / RP62A).